Here is a 252-residue protein sequence, read N- to C-terminus: MTTKLSVNLNKVALVRNTRHLGIPSVTRAATLCLQAGANGITVHPRPDERHIRTDDVRDLALLMQAWPDREFNIEGNPLHNLMDVVHGLVEKKLPVHQVTFVPDSEGQFTSDHGWNFPGDASRLRPLIAQAHAWGLRVSLFMDADPAAMAGAQAVGADRVELYTEPYAAAWGTAQQTPQLARFAETARAALKLGLGVNAGHDLNRDNLSAFIQAVPGVAEVSIGHALIADALELGYSATVQAYLRCIAQGRS.

N8 and R19 together coordinate 3-amino-2-oxopropyl phosphate. H44 acts as the Proton acceptor in catalysis. 1-deoxy-D-xylulose 5-phosphate contacts are provided by R46 and H51. Residue E75 is the Proton acceptor of the active site. 1-deoxy-D-xylulose 5-phosphate is bound at residue T110. H201 serves as the catalytic Proton donor. 3-amino-2-oxopropyl phosphate contacts are provided by residues D202 and 224–225 (GH).

The protein belongs to the PNP synthase family. In terms of assembly, homooctamer; tetramer of dimers.

The protein localises to the cytoplasm. It catalyses the reaction 3-amino-2-oxopropyl phosphate + 1-deoxy-D-xylulose 5-phosphate = pyridoxine 5'-phosphate + phosphate + 2 H2O + H(+). The protein operates within cofactor biosynthesis; pyridoxine 5'-phosphate biosynthesis; pyridoxine 5'-phosphate from D-erythrose 4-phosphate: step 5/5. In terms of biological role, catalyzes the complicated ring closure reaction between the two acyclic compounds 1-deoxy-D-xylulose-5-phosphate (DXP) and 3-amino-2-oxopropyl phosphate (1-amino-acetone-3-phosphate or AAP) to form pyridoxine 5'-phosphate (PNP) and inorganic phosphate. The chain is Pyridoxine 5'-phosphate synthase from Albidiferax ferrireducens (strain ATCC BAA-621 / DSM 15236 / T118) (Rhodoferax ferrireducens).